The chain runs to 511 residues: Cytochrome P450 monooxygenase PUL2 (511 aa).

A helical membrane pass occupies residues 14-34 (WMAFVYFTPVLFVVLYLLKEW). N-linked (GlcNAc...) asparagine glycans are attached at residues N116, N141, and N442. C462 lines the heme pocket.

The protein belongs to the cytochrome P450 family. Heme is required as a cofactor.

It is found in the membrane. Its pathway is siderophore biosynthesis. Its function is as follows. Cytochrome P450 monooxygenase; part of the PUL gene cluster that mediates the formation of pulcherrimin, a red iron-containing pigment composed of two cyclized and modified leucine molecules that acts as a siderophore, a chelator that binds iron outside the cell for subsequent uptake. Two leucine molecules are cyclized via a cyclodipeptide synthase, and the resulting diketopiperazine is oxidized by a cytochrome P450 monooxygenase to generate pulcherriminic acid (PA), which can then spontaneously bind iron to form pulcherrimin. The probable cyclodipeptide synthase PUL1 and the cytochrome P450 monooxygenase PUL2 encode the enzymes responsible for the two-step pulcherrimin biosynthesis pathway. This is Cytochrome P450 monooxygenase PUL2 from Kluyveromyces lactis (strain ATCC 8585 / CBS 2359 / DSM 70799 / NBRC 1267 / NRRL Y-1140 / WM37) (Yeast).